Here is a 232-residue protein sequence, read N- to C-terminus: MSAAIWVVVPAAGRGTRFGAPLPKQYLQAGGQILLAHTLDALLAHPAVAGAMVVIGQDDADWPGWNEWAGKPVLTCIGGATRAASVLAGLQALPETVRADEFVLVHDAARPNLSPADLGRLLEVGRTDPVGAILAAPVRDTLKRAGDDGGIDGTEPRERLWRALTPQLFRRHQLSRALSDAAAAGVEVTDEAMAMERQGQRPLLVEGSEDNFKVTTPADLDRFEFVLSRRAG.

The protein belongs to the IspD/TarI cytidylyltransferase family. IspD subfamily.

It carries out the reaction 2-C-methyl-D-erythritol 4-phosphate + CTP + H(+) = 4-CDP-2-C-methyl-D-erythritol + diphosphate. It participates in isoprenoid biosynthesis; isopentenyl diphosphate biosynthesis via DXP pathway; isopentenyl diphosphate from 1-deoxy-D-xylulose 5-phosphate: step 2/6. Its function is as follows. Catalyzes the formation of 4-diphosphocytidyl-2-C-methyl-D-erythritol from CTP and 2-C-methyl-D-erythritol 4-phosphate (MEP). The chain is 2-C-methyl-D-erythritol 4-phosphate cytidylyltransferase from Stenotrophomonas maltophilia (strain K279a).